The chain runs to 315 residues: Lipoyl synthase (315 aa).

7 residues coordinate [4Fe-4S] cluster: cysteine 63, cysteine 68, cysteine 74, cysteine 89, cysteine 93, cysteine 96, and serine 303. A Radical SAM core domain is found at 75–292 (FSHGTATFMI…EKKAYDMGFR (218 aa)).

It belongs to the radical SAM superfamily. Lipoyl synthase family. It depends on [4Fe-4S] cluster as a cofactor.

Its subcellular location is the cytoplasm. The enzyme catalyses [[Fe-S] cluster scaffold protein carrying a second [4Fe-4S](2+) cluster] + N(6)-octanoyl-L-lysyl-[protein] + 2 oxidized [2Fe-2S]-[ferredoxin] + 2 S-adenosyl-L-methionine + 4 H(+) = [[Fe-S] cluster scaffold protein] + N(6)-[(R)-dihydrolipoyl]-L-lysyl-[protein] + 4 Fe(3+) + 2 hydrogen sulfide + 2 5'-deoxyadenosine + 2 L-methionine + 2 reduced [2Fe-2S]-[ferredoxin]. The protein operates within protein modification; protein lipoylation via endogenous pathway; protein N(6)-(lipoyl)lysine from octanoyl-[acyl-carrier-protein]: step 2/2. Catalyzes the radical-mediated insertion of two sulfur atoms into the C-6 and C-8 positions of the octanoyl moiety bound to the lipoyl domains of lipoate-dependent enzymes, thereby converting the octanoylated domains into lipoylated derivatives. The polypeptide is Lipoyl synthase (Laribacter hongkongensis (strain HLHK9)).